A 180-amino-acid chain; its full sequence is Putative adenylate kinase (180 aa).

G10, G12, K13, T14, and T15 together coordinate ATP. Residues 30-50 (NLRDFALEKGCGREVDGEVEV) form an NMP region. Positions 99–109 (ERGYSKEKIGE) are LID. ATP-binding residues include R100 and K138.

The protein belongs to the adenylate kinase family. AK6 subfamily. As to quaternary structure, interacts with uS11. Not a structural component of 40S pre-ribosomes, but transiently interacts with them by binding to uS11.

The enzyme catalyses AMP + ATP = 2 ADP. It catalyses the reaction ATP + H2O = ADP + phosphate + H(+). Its function is as follows. Broad-specificity nucleoside monophosphate (NMP) kinase that catalyzes the reversible transfer of the terminal phosphate group between nucleoside triphosphates and monophosphates. Also has ATPase activity. Involved in the late maturation steps of the 30S ribosomal particles, specifically 16S rRNA maturation. While NMP activity is not required for ribosome maturation, ATPase activity is. Associates transiently with small ribosomal subunit protein uS11. ATP hydrolysis breaks the interaction with uS11. May temporarily remove uS11 from the ribosome to enable a conformational change of the ribosomal RNA that is needed for the final maturation step of the small ribosomal subunit. The polypeptide is Putative adenylate kinase (Pyrococcus abyssi (strain GE5 / Orsay)).